A 493-amino-acid chain; its full sequence is Chitobiosyldiphosphodolichol beta-mannosyltransferase (493 aa).

The Lumenal segment spans residues 1 to 71 (MNRVAVVVLG…PISMSNSFKK (71 aa)). Residues 72-92 (IPLISIFMWPLLAICKVLFQI) form a helical membrane-spanning segment. The Cytoplasmic segment spans residues 93–109 (IQLMYVLLVKVPSPLNT). The segment at residues 110 to 130 (ILVQSPPAIPTIFVMQIVCWI) is an intramembrane region (helical). At 131-493 (RGVHLVIDWH…SSSNSKSKKD (363 aa)) the chain is on the cytoplasmic side. Positions 462–493 (FIPSSSSSSSSSSSSSSSSSSSSSSNSKSKKD) are disordered. The span at 465-493 (SSSSSSSSSSSSSSSSSSSSSSNSKSKKD) shows a compositional bias: low complexity.

Belongs to the glycosyltransferase group 1 family. Glycosyltransferase 33 subfamily.

It localises to the endoplasmic reticulum membrane. It carries out the reaction an N,N'-diacetylchitobiosyl-diphospho-di-trans,poly-cis-dolichol + GDP-alpha-D-mannose = a beta-D-Man-(1-&gt;4)-beta-D-GlcNAc-(1-&gt;4)-alpha-D-GlcNAc-diphospho-di-trans,poly-cis-dolichol + GDP + H(+). Its pathway is protein modification; protein glycosylation. Participates in the formation of the lipid-linked precursor oligosaccharide for N-glycosylation. Involved in assembling the dolichol-pyrophosphate-GlcNAc(2)-Man(5) intermediate on the cytoplasmic surface of the ER. The polypeptide is Chitobiosyldiphosphodolichol beta-mannosyltransferase (alg1) (Dictyostelium discoideum (Social amoeba)).